The primary structure comprises 465 residues: Kinesin-like protein KIN-1 (465 aa).

The 332-residue stretch at 3-334 folds into the Kinesin motor domain; sequence NVTVCARFRP…LRFGMRAKHI (332 aa). 87–94 serves as a coordination point for ATP; the sequence is GQTGAGKT. The tract at residues 338–358 is disordered; it reads PRASEVKSAKAQEEPSSVTKD. Residues 341 to 358 show a composition bias toward basic and acidic residues; that stretch reads SEVKSAKAQEEPSSVTKD. Residues 402–444 are a coiled coil; that stretch reads VYEDIVSKTIQSLQQAVDELQQKVKKLEAENIGIQEQALRNHE.

The protein belongs to the TRAFAC class myosin-kinesin ATPase superfamily. Kinesin family. KIN-1 subfamily. Homodimer. Interacts with WIP1 and WIP2. Specifically expressed in ovules and anthers.

Kinesin-like motor protein that promotes synapsis and is required for proper crossover distribution in meiosis. Plays a role in the nuclear division cycles during megagametogenesis. This is Kinesin-like protein KIN-1 from Arabidopsis thaliana (Mouse-ear cress).